The primary structure comprises 103 residues: Co-chaperonin GroES (103 aa).

This sequence belongs to the GroES chaperonin family. In terms of assembly, heptamer of 7 subunits arranged in a ring. Interacts with the chaperonin GroEL.

Its subcellular location is the cytoplasm. Its function is as follows. Together with the chaperonin GroEL, plays an essential role in assisting protein folding. The GroEL-GroES system forms a nano-cage that allows encapsulation of the non-native substrate proteins and provides a physical environment optimized to promote and accelerate protein folding. GroES binds to the apical surface of the GroEL ring, thereby capping the opening of the GroEL channel. The protein is Co-chaperonin GroES of Prochlorococcus marinus (strain SARG / CCMP1375 / SS120).